Reading from the N-terminus, the 215-residue chain is Large ribosomal subunit protein uL4 (215 aa).

The tract at residues 46-76 is disordered; the sequence is TAKSKNRAEVSGGGRKPWAQKGGGRARAGSI. Gly residues predominate over residues 56 to 71; the sequence is SGGGRKPWAQKGGGRA.

It belongs to the universal ribosomal protein uL4 family. As to quaternary structure, part of the 50S ribosomal subunit.

Its function is as follows. One of the primary rRNA binding proteins, this protein initially binds near the 5'-end of the 23S rRNA. It is important during the early stages of 50S assembly. It makes multiple contacts with different domains of the 23S rRNA in the assembled 50S subunit and ribosome. Forms part of the polypeptide exit tunnel. The chain is Large ribosomal subunit protein uL4 from Helicobacter acinonychis (strain Sheeba).